The following is a 271-amino-acid chain: Large ribosomal subunit protein uL2cz/uL2cy (271 aa).

Disordered stretches follow at residues 1–22 (MAKH…DRQV) and 223–271 (PVDH…RRRK).

The protein belongs to the universal ribosomal protein uL2 family. Part of the 50S ribosomal subunit.

The protein resides in the plastid. Its subcellular location is the chloroplast. In Sorghum bicolor (Sorghum), this protein is Large ribosomal subunit protein uL2cz/uL2cy (rpl2-A).